The chain runs to 208 residues: Probable very-long-chain (3R)-3-hydroxyacyl-CoA dehydratase (208 aa).

Topologically, residues 1 to 11 are cytoplasmic; it reads MSKILKIQYLK. A helical transmembrane segment spans residues 12–35; the sequence is LYNVISCFLWMSVLLRTGLIWGIT. Residues 36-46 are Lumenal-facing; sequence KDTAVVFHETN. A helical transmembrane segment spans residues 47–67; sequence TLVRWVQTLAIAEVFHSIFGL. At 68-78 the chain is on the cytoplasmic side; it reads VSSSPLTTIIQ. The helical transmembrane segment at 79–97 threads the bilayer; that stretch reads VASRLYLVWGVCYPFSYVI. At 98-102 the chain is on the lumenal side; sequence EGSPI. The chain crosses the membrane as a helical span at residues 103–123; it reads YLSMIIAWSITEIIRYAFYAF. The Cytoplasmic portion of the chain corresponds to 124–134; sequence NLNGDIPAFLT. Residues 135 to 157 traverse the membrane as a helical segment; sequence WLRYNTFLILYPIGAGSEFLLVL. Active-site residues include Y145 and E152. Over 158 to 171 the chain is Lumenal; it reads KSRIAAQYVWSLNK. A helical membrane pass occupies residues 172-192; it reads LLWPILMSIYPPGLYIMYTHM. At 193–208 the chain is on the cytoplasmic side; the sequence is LAQRRKISKRAAARRT.

Belongs to the very long-chain fatty acids dehydratase HACD family.

Its subcellular location is the endoplasmic reticulum membrane. It carries out the reaction a very-long-chain (3R)-3-hydroxyacyl-CoA = a very-long-chain (2E)-enoyl-CoA + H2O. Its pathway is lipid metabolism; fatty acid biosynthesis. Functionally, catalyzes the third of the four reactions of the long-chain fatty acids elongation cycle. This endoplasmic reticulum-bound enzymatic process, allows the addition of two carbons to the chain of long- and very long-chain fatty acids/VLCFAs per cycle. This enzyme catalyzes the dehydration of the 3-hydroxyacyl-CoA intermediate into trans-2,3-enoyl-CoA, within each cycle of fatty acid elongation. Thereby, it participates in the production of VLCFAs of different chain lengths that are involved in multiple biological processes as precursors of membrane lipids and lipid mediators. This Schizosaccharomyces pombe (strain 972 / ATCC 24843) (Fission yeast) protein is Probable very-long-chain (3R)-3-hydroxyacyl-CoA dehydratase.